Consider the following 246-residue polypeptide: Endonuclease V (246 aa).

Mg(2+) contacts are provided by Asp50 and Asp120.

The protein belongs to the endonuclease V family. Mg(2+) serves as cofactor.

The protein localises to the cytoplasm. The catalysed reaction is Endonucleolytic cleavage at apurinic or apyrimidinic sites to products with a 5'-phosphate.. Functionally, DNA repair enzyme involved in the repair of deaminated bases. Selectively cleaves double-stranded DNA at the second phosphodiester bond 3' to a deoxyinosine leaving behind the intact lesion on the nicked DNA. This Gloeobacter violaceus (strain ATCC 29082 / PCC 7421) protein is Endonuclease V.